Consider the following 148-residue polypeptide: 3-dehydroquinate dehydratase (148 aa).

Tyr22 acts as the Proton acceptor in catalysis. The substrate site is built by Asn73, His79, and Asp86. His99 serves as the catalytic Proton donor. Substrate-binding positions include 100–101 (LS) and Arg110.

This sequence belongs to the type-II 3-dehydroquinase family. As to quaternary structure, homododecamer.

It catalyses the reaction 3-dehydroquinate = 3-dehydroshikimate + H2O. Its pathway is metabolic intermediate biosynthesis; chorismate biosynthesis; chorismate from D-erythrose 4-phosphate and phosphoenolpyruvate: step 3/7. Catalyzes a trans-dehydration via an enolate intermediate. This is 3-dehydroquinate dehydratase from Jannaschia sp. (strain CCS1).